The chain runs to 198 residues: Holliday junction branch migration complex subunit RuvA (198 aa).

Positions 1–64 (MIAHLRGTLL…EDAIALFGFL (64 aa)) are domain I. The domain II stretch occupies residues 65-141 (DREEKRLFER…LDDLIAAAPA (77 aa)). Residues 141-145 (AAGPV) form a flexible linker region. The tract at residues 146–198 (AAGPAAEDVLSALLNLGYQRPAALKAIETAVEKDAAAGEDFDLLFRAALKLIR) is domain III.

It belongs to the RuvA family. Homotetramer. Forms an RuvA(8)-RuvB(12)-Holliday junction (HJ) complex. HJ DNA is sandwiched between 2 RuvA tetramers; dsDNA enters through RuvA and exits via RuvB. An RuvB hexamer assembles on each DNA strand where it exits the tetramer. Each RuvB hexamer is contacted by two RuvA subunits (via domain III) on 2 adjacent RuvB subunits; this complex drives branch migration. In the full resolvosome a probable DNA-RuvA(4)-RuvB(12)-RuvC(2) complex forms which resolves the HJ.

It localises to the cytoplasm. In terms of biological role, the RuvA-RuvB-RuvC complex processes Holliday junction (HJ) DNA during genetic recombination and DNA repair, while the RuvA-RuvB complex plays an important role in the rescue of blocked DNA replication forks via replication fork reversal (RFR). RuvA specifically binds to HJ cruciform DNA, conferring on it an open structure. The RuvB hexamer acts as an ATP-dependent pump, pulling dsDNA into and through the RuvAB complex. HJ branch migration allows RuvC to scan DNA until it finds its consensus sequence, where it cleaves and resolves the cruciform DNA. In Acidobacterium capsulatum (strain ATCC 51196 / DSM 11244 / BCRC 80197 / JCM 7670 / NBRC 15755 / NCIMB 13165 / 161), this protein is Holliday junction branch migration complex subunit RuvA.